The sequence spans 94 residues: Integration host factor subunit beta (94 aa).

The protein belongs to the bacterial histone-like protein family. In terms of assembly, heterodimer of an alpha and a beta chain.

In terms of biological role, this protein is one of the two subunits of integration host factor, a specific DNA-binding protein that functions in genetic recombination as well as in transcriptional and translational control. The sequence is that of Integration host factor subunit beta from Vibrio atlanticus (strain LGP32) (Vibrio splendidus (strain Mel32)).